The primary structure comprises 468 residues: RuvB-like helicase 2 (468 aa).

Residue 76–83 (GPPSTGKT) participates in ATP binding.

The protein belongs to the RuvB family. As to quaternary structure, may form heterododecamers with RVB1. Component of the SWR1 chromatin remodeling complex, the INO80 chromatin remodeling complex, and of the R2TP complex.

The protein resides in the nucleus. It carries out the reaction ATP + H2O = ADP + phosphate + H(+). Functionally, DNA helicase which participates in several chromatin remodeling complexes, including the SWR1 and the INO80 complexes. The SWR1 complex mediates the ATP-dependent exchange of histone H2A for the H2A variant HZT1 leading to transcriptional regulation of selected genes by chromatin remodeling. The INO80 complex remodels chromatin by shifting nucleosomes and is involved in DNA repair. Also involved in pre-rRNA processing. The sequence is that of RuvB-like helicase 2 (rvb2) from Emericella nidulans (strain FGSC A4 / ATCC 38163 / CBS 112.46 / NRRL 194 / M139) (Aspergillus nidulans).